The following is a 185-amino-acid chain: Calcium and integrin-binding family member 4 (185 aa).

EF-hand domains are found at residues Arg-62–Gln-95, Cys-97–Ser-132, and Asp-138–Phe-174. Residues Asp-110, Asn-112, Asn-114, and Asp-121 each contribute to the Ca(2+) site.

Interacts with ITGA2B (via C-terminus cytoplasmic tail region); the interaction is stabilized/increased in a calcium- and magnesium-dependent manner. In terms of tissue distribution, expressed weakly in megakaryocytes and endothelial cells.

The chain is Calcium and integrin-binding family member 4 (Cib4) from Mus musculus (Mouse).